The sequence spans 363 residues: MSAIYNFCAGPAMLPAAVMKKAQQELLDWNGQGVSVMEISHRSKEFIALTQQAESDLRELMQIPTNYHVLFMHGGGRGQFSAVVNNFLGNHGRALYLVSGQWSSAALAEAQKLVGEAQIDSLNIVEKHNGLNAVVLPDLHKIDADYRYVHYCPNETVDGIEIFDELDSPWPIVADLSSTIMSREIDVSRYGLIYAGAQKNIGPSGLSIVIVRDDMLKLPSLPQSSIMDYRLAVEHDSMFNTPPTFAWYLAAEVFAWLKSTGGISSIAKINQQKAQMLYQCIDGNAFYRNGVVAANRSQMNVTFQLVNEALDGEFLKQAQIAGLVALKGHRIVGGMRASLYNAMPLDGIVALVKFMNEFAAKHS.

Residue R42 coordinates L-glutamate. Pyridoxal 5'-phosphate-binding positions include 76 to 77, W102, T156, D175, and Q198; that span reads GR. The residue at position 199 (K199) is an N6-(pyridoxal phosphate)lysine. 240–241 contributes to the pyridoxal 5'-phosphate binding site; the sequence is NT.

The protein belongs to the class-V pyridoxal-phosphate-dependent aminotransferase family. SerC subfamily. As to quaternary structure, homodimer. Pyridoxal 5'-phosphate is required as a cofactor.

The protein resides in the cytoplasm. It catalyses the reaction O-phospho-L-serine + 2-oxoglutarate = 3-phosphooxypyruvate + L-glutamate. It carries out the reaction 4-(phosphooxy)-L-threonine + 2-oxoglutarate = (R)-3-hydroxy-2-oxo-4-phosphooxybutanoate + L-glutamate. It functions in the pathway amino-acid biosynthesis; L-serine biosynthesis; L-serine from 3-phospho-D-glycerate: step 2/3. Its pathway is cofactor biosynthesis; pyridoxine 5'-phosphate biosynthesis; pyridoxine 5'-phosphate from D-erythrose 4-phosphate: step 3/5. Functionally, catalyzes the reversible conversion of 3-phosphohydroxypyruvate to phosphoserine and of 3-hydroxy-2-oxo-4-phosphonooxybutanoate to phosphohydroxythreonine. The chain is Phosphoserine aminotransferase from Shewanella baltica (strain OS185).